We begin with the raw amino-acid sequence, 770 residues long: PH and SEC7 domain-containing protein 2 (770 aa).

Over residues Met-1–Glu-24 the composition is skewed to basic and acidic residues. Disordered stretches follow at residues Met-1–Asp-65 and Ile-181–Cys-304. Residues Gln-32 to Ile-45 show a composition bias toward polar residues. Ser-188 bears the Phosphoserine mark. Low complexity-rich tracts occupy residues Leu-216–Ser-234 and Glu-285–Ser-296. The SEC7 domain occupies Asp-256–Glu-459. A PH domain is found at Thr-509–Ala-622. A helical membrane pass occupies residues Leu-619–Met-636. A coiled-coil region spans residues Arg-650–His-677. The segment at Pro-738–Thr-770 is disordered.

It belongs to the PSD family.

It is found in the cell membrane. Its subcellular location is the cell projection. The protein resides in the ruffle membrane. It localises to the cleavage furrow. In Mus musculus (Mouse), this protein is PH and SEC7 domain-containing protein 2 (Psd2).